The chain runs to 168 residues: Protein OPG162 (168 aa).

Over 1–14 (MKSLNRQTVSRFKK) the chain is Intravirion. A helical membrane pass occupies residues 15–37 (LSVPAAIMMILSTIISGIGTFLH). Topologically, residues 38-168 (YKEELMPSAC…SVLCVKRFYK (131 aa)) are virion surface. A C-type lectin domain is found at 54 to 163 (YDKHCYLDTN…CKSTQSVLCV (110 aa)). 2 disulfide bridges follow: Cys-75–Cys-162 and Cys-141–Cys-154. Asn-133 carries an N-linked (GlcNAc...) asparagine; by host glycan.

The protein belongs to the orthopoxvirus OPG162 protein family. In terms of assembly, interacts with protein OPG161. Interacts with protein OPG164. Interacts with protein OPG190.

It is found in the virion membrane. The protein localises to the host Golgi apparatus. Forms a complex with OPG162 and OPG190 to coordinate the incorporation of OPG164 into wrapped enveloped virion (EV) membranes and, subsequently, the production of actin tails. Therefore plays an essential role in efficient cell-to-cell spread of viral particles. This chain is Protein OPG162 (OPG162), found in Variola virus (isolate Human/India/Ind3/1967) (VARV).